The sequence spans 100 residues: Integration host factor subunit alpha (100 aa).

A disordered region spans residues 53–72 (FQLRDKPQRPGRNPKTGEEV).

Belongs to the bacterial histone-like protein family. Heterodimer of an alpha and a beta chain.

Functionally, this protein is one of the two subunits of integration host factor, a specific DNA-binding protein that functions in genetic recombination as well as in transcriptional and translational control. The protein is Integration host factor subunit alpha of Neisseria meningitidis serogroup C (strain 053442).